We begin with the raw amino-acid sequence, 312 residues long: MRKHTAITTFILLGLTEDPQLQVLLFMFLFITYMLSVTGKLTIIALTMLDPHLKTPMYFFLQNLSFLEISFTATCVPRFLYSISTGNKIITYNACVIQLFFADLFGVTEFFLLATMSYDRYVAICKPLHYMAIMSNKVCKTMVICCWMAALMIILPPLSLGFHLEFCDSNVINHFGCDALPILKIPCSDTSLIEQMVVASAVLTFIITLVCVVLSYTYIIRTILKFPSVQQKKKAFSTCSSHITVVSITYGSCIFIYIKPSAKEEVNINKGVSVLISSISPMLNSFIYTLRNEQVKQAFHDSLKKIAFRLKK.

Topologically, residues 1–23 (MRKHTAITTFILLGLTEDPQLQV) are extracellular. A helical transmembrane segment spans residues 24 to 44 (LLFMFLFITYMLSVTGKLTII). Residues 45–55 (ALTMLDPHLKT) are Cytoplasmic-facing. Residues 56 to 76 (PMYFFLQNLSFLEISFTATCV) form a helical membrane-spanning segment. The Extracellular portion of the chain corresponds to 77–95 (PRFLYSISTGNKIITYNAC). An intrachain disulfide couples Cys-95 to Cys-177. Residues 96–116 (VIQLFFADLFGVTEFFLLATM) traverse the membrane as a helical segment. The Cytoplasmic portion of the chain corresponds to 117-143 (SYDRYVAICKPLHYMAIMSNKVCKTMV). The helical transmembrane segment at 144–164 (ICCWMAALMIILPPLSLGFHL) threads the bilayer. Topologically, residues 165-197 (EFCDSNVINHFGCDALPILKIPCSDTSLIEQMV) are extracellular. A helical transmembrane segment spans residues 198–218 (VASAVLTFIITLVCVVLSYTY). The Cytoplasmic segment spans residues 219–239 (IIRTILKFPSVQQKKKAFSTC). Residues 240–260 (SSHITVVSITYGSCIFIYIKP) traverse the membrane as a helical segment. At 261–271 (SAKEEVNINKG) the chain is on the extracellular side. A helical transmembrane segment spans residues 272–292 (VSVLISSISPMLNSFIYTLRN). Over 293–312 (EQVKQAFHDSLKKIAFRLKK) the chain is Cytoplasmic.

It belongs to the G-protein coupled receptor 1 family.

It localises to the cell membrane. Functionally, odorant receptor. The polypeptide is Olfactory receptor 6C68 (OR6C68) (Homo sapiens (Human)).